A 326-amino-acid chain; its full sequence is Glycerol-3-phosphate dehydrogenase [NAD(P)+] (326 aa).

3 residues coordinate NADPH: W15, R35, and K107. 3 residues coordinate sn-glycerol 3-phosphate: K107, G135, and S137. An NADPH-binding site is contributed by A139. K190, D243, S253, R254, and N255 together coordinate sn-glycerol 3-phosphate. The active-site Proton acceptor is the K190. NADPH is bound at residue R254. 2 residues coordinate NADPH: L273 and E275.

The protein belongs to the NAD-dependent glycerol-3-phosphate dehydrogenase family.

The protein resides in the cytoplasm. The enzyme catalyses sn-glycerol 3-phosphate + NAD(+) = dihydroxyacetone phosphate + NADH + H(+). It carries out the reaction sn-glycerol 3-phosphate + NADP(+) = dihydroxyacetone phosphate + NADPH + H(+). It participates in membrane lipid metabolism; glycerophospholipid metabolism. Catalyzes the reduction of the glycolytic intermediate dihydroxyacetone phosphate (DHAP) to sn-glycerol 3-phosphate (G3P), the key precursor for phospholipid synthesis. This chain is Glycerol-3-phosphate dehydrogenase [NAD(P)+], found in Bradyrhizobium sp. (strain BTAi1 / ATCC BAA-1182).